Consider the following 58-residue polypeptide: Small ribosomal subunit protein bS21 (58 aa).

The disordered stretch occupies residues 37–58; sequence FYEKPSVKRKKKSEAARKRKKF. Residues 43-58 are compositionally biased toward basic residues; the sequence is VKRKKKSEAARKRKKF.

This sequence belongs to the bacterial ribosomal protein bS21 family.

This is Small ribosomal subunit protein bS21 from Enterococcus faecalis (strain ATCC 700802 / V583).